Reading from the N-terminus, the 323-residue chain is Cell division protein ZipA (323 aa).

The Periplasmic portion of the chain corresponds to 1–4; the sequence is MDLN. Residues 5 to 25 traverse the membrane as a helical segment; sequence TILIILGIIALIILVVHGLWA. Over 26-323 the chain is Cytoplasmic; the sequence is NRREKSQYFK…AEKAYLDKVR (298 aa). The tract at residues 44 to 73 is disordered; that stretch reads SRLREPPAHIQSASEEKKDANTSTPTAEVS.

Belongs to the ZipA family. Interacts with FtsZ via their C-terminal domains.

Its subcellular location is the cell inner membrane. Functionally, essential cell division protein that stabilizes the FtsZ protofilaments by cross-linking them and that serves as a cytoplasmic membrane anchor for the Z ring. Also required for the recruitment to the septal ring of downstream cell division proteins. The protein is Cell division protein ZipA of Pasteurella multocida (strain Pm70).